We begin with the raw amino-acid sequence, 324 residues long: Pseudouridine-5'-phosphate glycosidase (324 aa).

Glu43 (proton donor) is an active-site residue. Residues Lys104 and Val124 each contribute to the substrate site. Asp156 lines the Mn(2+) pocket. Residue 158–160 (SAD) participates in substrate binding. The active-site Nucleophile is the Lys177.

This sequence belongs to the pseudouridine-5'-phosphate glycosidase family. Homotrimer. It depends on Mn(2+) as a cofactor.

It carries out the reaction D-ribose 5-phosphate + uracil = psi-UMP + H2O. In terms of biological role, catalyzes the reversible cleavage of pseudouridine 5'-phosphate (PsiMP) to ribose 5-phosphate and uracil. Functions biologically in the cleavage direction, as part of a pseudouridine degradation pathway. In Salinispora tropica (strain ATCC BAA-916 / DSM 44818 / JCM 13857 / NBRC 105044 / CNB-440), this protein is Pseudouridine-5'-phosphate glycosidase.